The chain runs to 575 residues: Proline--tRNA ligase 1 (575 aa).

This sequence belongs to the class-II aminoacyl-tRNA synthetase family. ProS type 1 subfamily. In terms of assembly, homodimer.

Its subcellular location is the cytoplasm. It carries out the reaction tRNA(Pro) + L-proline + ATP = L-prolyl-tRNA(Pro) + AMP + diphosphate. Its function is as follows. Catalyzes the attachment of proline to tRNA(Pro) in a two-step reaction: proline is first activated by ATP to form Pro-AMP and then transferred to the acceptor end of tRNA(Pro). As ProRS can inadvertently accommodate and process non-cognate amino acids such as alanine and cysteine, to avoid such errors it has two additional distinct editing activities against alanine. One activity is designated as 'pretransfer' editing and involves the tRNA(Pro)-independent hydrolysis of activated Ala-AMP. The other activity is designated 'posttransfer' editing and involves deacylation of mischarged Ala-tRNA(Pro). The misacylated Cys-tRNA(Pro) is not edited by ProRS. The polypeptide is Proline--tRNA ligase 1 (Anaeromyxobacter dehalogenans (strain 2CP-C)).